The primary structure comprises 340 residues: Guanine nucleotide-binding protein G(I)/G(S)/G(T) subunit beta-1 (340 aa).

7 WD repeats span residues 53–83 (GHLAKIYAMHWGTDSRLLVSASQDGKLIIWD), 95–125 (LRSSWVMTCAYAPSGNYVACGGLDNICSIYN), 141–170 (GHTGYLSCCRFLDDNQIVTSSGDTTCALWD), 182–212 (GHTGDVMSLSLAPDTRLFVSGACDASAKLWD), 224–254 (GHESDINAICFFPNGNAFATGSDDATCRLFD), 268–298 (NIICGITSVAFSKSGRLLLAGYDDFNCNVWD), and 310–340 (GHDNRVSCLGVTDDGMAVATGSWDSFLKIWN).

It belongs to the WD repeat G protein beta family. G proteins are composed of 3 units, alpha, beta and gamma.

Functionally, guanine nucleotide-binding proteins (G proteins) are involved as a modulator or transducer in various transmembrane signaling systems. The beta and gamma chains are required for the GTPase activity, for replacement of GDP by GTP, and for G protein-effector interaction. This Danio rerio (Zebrafish) protein is Guanine nucleotide-binding protein G(I)/G(S)/G(T) subunit beta-1 (gnb1).